The chain runs to 257 residues: MEIHHQLLVSLLFLLLPLCSSQENTRSLAIDVNGPVETSPISEKLNPKLVYEIKVHGFMLWAAMGVLMPIGIISIRLMSIKDQPIITLRRLFFLHVTSQMVAVILVTIGAVMSVINFNNSFSNHHQQLGIGLYVIVWFQALLGFLRPPREEKARRKWFVGHWILGTSIAILGIINIYTGLHAYAKKTSKSANLWTILFTAQLSCIALVYLFQDKWSYIQSQATFNRNQSVDHNSNISTAETGHGYEVEESKPELEKC.

The first 21 residues, 1–21 (MEIHHQLLVSLLFLLLPLCSS), serve as a signal peptide directing secretion. In terms of domain architecture, Cytochrome b561 spans 22 to 219 (QENTRSLAID…LFQDKWSYIQ (198 aa)). Transmembrane regions (helical) follow at residues 55 to 75 (VHGF…IISI), 91 to 111 (LFFL…IGAV), 125 to 145 (HQQL…LGFL), 157 to 177 (WFVG…INIY), and 191 to 211 (ANLW…VYLF). Residues His56, His95, His125, and His161 each coordinate heme b. The interval 235 to 257 (NISTAETGHGYEVEESKPELEKC) is disordered. The segment covering 243-257 (HGYEVEESKPELEKC) has biased composition (basic and acidic residues).

Heme b serves as cofactor.

It localises to the membrane. This chain is Cytochrome b561 domain-containing protein At2g30890, found in Arabidopsis thaliana (Mouse-ear cress).